The primary structure comprises 237 residues: Phosphoglycolate phosphatase (237 aa).

Residue D15 is the Nucleophile of the active site. Residues D15, D17, and D177 each contribute to the Mg(2+) site.

This sequence belongs to the HAD-like hydrolase superfamily. CbbY/CbbZ/Gph/YieH family. Mg(2+) serves as cofactor.

It carries out the reaction 2-phosphoglycolate + H2O = glycolate + phosphate. It participates in organic acid metabolism; glycolate biosynthesis; glycolate from 2-phosphoglycolate: step 1/1. Specifically catalyzes the dephosphorylation of 2-phosphoglycolate. Is involved in the dissimilation of the intracellular 2-phosphoglycolate formed during the DNA repair of 3'-phosphoglycolate ends, a major class of DNA lesions induced by oxidative stress. In Caulobacter vibrioides (strain ATCC 19089 / CIP 103742 / CB 15) (Caulobacter crescentus), this protein is Phosphoglycolate phosphatase.